Here is a 232-residue protein sequence, read N- to C-terminus: Ion-translocating oxidoreductase complex subunit E (232 aa).

5 consecutive transmembrane segments (helical) span residues 39–59 (LGLG…ISLV), 69–89 (IPVF…LVNA), 93–113 (GLYM…IIIG), 128–148 (AFDG…LGAT), and 182–202 (SFLL…LIAL).

It belongs to the NqrDE/RnfAE family. In terms of assembly, the complex is composed of six subunits: RnfA, RnfB, RnfC, RnfD, RnfE and RnfG.

It localises to the cell inner membrane. In terms of biological role, part of a membrane-bound complex that couples electron transfer with translocation of ions across the membrane. The sequence is that of Ion-translocating oxidoreductase complex subunit E from Shewanella oneidensis (strain ATCC 700550 / JCM 31522 / CIP 106686 / LMG 19005 / NCIMB 14063 / MR-1).